A 241-amino-acid chain; its full sequence is Large ribosomal subunit protein uL3 (241 aa).

Disordered stretches follow at residues 139–166 (VSHR…PGHM) and 214–241 (ADAP…QEGA). Residue Gln-151 is modified to N5-methylglutamine. Over residues 229–241 (AAAEAPAAEQEGA) the composition is skewed to low complexity.

In terms of assembly, part of the 50S ribosomal subunit. Forms a cluster with proteins L14 and L19. Methylated, on either Lys-155 or Lys-158. In terms of processing, methylated by PrmB.

In terms of biological role, one of the primary rRNA binding proteins, it binds directly near the 3'-end of the 23S rRNA, where it nucleates assembly of the 50S subunit. The chain is Large ribosomal subunit protein uL3 from Rhodopseudomonas palustris (strain ATCC BAA-98 / CGA009).